Consider the following 257-residue polypeptide: Phosphonates import ATP-binding protein PhnC (257 aa).

The ABC transporter domain occupies 2-246; sequence IEFRNVSKVY…KFAEIYGDVA (245 aa). 35–42 lines the ATP pocket; the sequence is GLSGAGKS.

This sequence belongs to the ABC transporter superfamily. Phosphonates importer (TC 3.A.1.9.1) family. The complex is composed of two ATP-binding proteins (PhnC), two transmembrane proteins (PhnE) and a solute-binding protein (PhnD).

The protein resides in the cell membrane. It catalyses the reaction phosphonate(out) + ATP + H2O = phosphonate(in) + ADP + phosphate + H(+). Part of the ABC transporter complex PhnCDE involved in phosphonates import. Responsible for energy coupling to the transport system. The polypeptide is Phosphonates import ATP-binding protein PhnC (Bacillus cereus (strain ZK / E33L)).